A 2326-amino-acid chain; its full sequence is Chondroitin sulfate proteoglycan 4 (2326 aa).

Residues Met1–Pro29 form the signal peptide. Laminin G-like domains are found at residues Ala30 to Cys193 and Val203 to Cys381. The interval Ala30–Thr640 is globular or compact configuration stabilized by disulfide bonds. The segment at Ala30–Thr640 is neurite growth inhibition. Residues Ala30–Asn2225 lie on the Extracellular side of the membrane. N-linked (GlcNAc...) asparagine glycosylation occurs at Asn130. Cys170 and Cys193 form a disulfide bridge. N-linked (GlcNAc...) asparagine glycosylation occurs at Asn349. Cysteines 355 and 381 form a disulfide. Residue Asn428 is glycosylated (N-linked (GlcNAc...) asparagine). CSPG repeat units lie at residues Phe429–Ser524, Pro554–Gly646, and Ala663–Gln765. The interaction with COL6A2 stretch occupies residues Gly575 to Asp1044. Positions Arg632 to Leu1450 are interaction with COL5A1. Asn686 and Asn773 each carry an N-linked (GlcNAc...) asparagine glycan. CSPG repeat units follow at residues Thr784 to Thr882 and Asn902 to Thr993. A glycan (O-linked (Xyl...) (chondroitin sulfate) serine) is linked at Ser999. CSPG repeat units lie at residues Ala1022–Gly1114, Tyr1130–Ala1220, Pro1242–Ala1341, Thr1360–Asn1453, Pro1477–Gly1567, Leu1585–Ser1683, Pro1708–His1807, Pro1836–Gly1928, and Thr1945–Leu2033. Asn1135 and Asn1206 each carry an N-linked (GlcNAc...) asparagine glycan. Residues Asn1368 and Asn1453 are each glycosylated (N-linked (GlcNAc...) asparagine). A neurite growth inhibition region spans residues Gly1590–Asn2225. The segment at Ser1591–Asn2225 is cysteine-containing. Asn1649 carries N-linked (GlcNAc...) asparagine glycosylation. 5 N-linked (GlcNAc...) asparagine glycosylation sites follow: Asn1913, Asn2020, Asn2038, Asn2044, and Asn2079. Residues Thr2042–Gln2151 form a CSPG 15 repeat. The disordered stretch occupies residues Arg2187–Met2210. Over residues Lys2195–Met2210 the composition is skewed to polar residues. The chain crosses the membrane as a helical span at residues Met2226 to Leu2250. Residues Arg2251 to Val2326 lie on the Cytoplasmic side of the membrane. A Phosphothreonine; by PKC/PRKCA modification is found at Thr2256. Residues Tyr2324–Val2326 carry the PDZ-binding motif.

Interacts with GRIP1, GRIP2 and GRIA2. Forms a ternary complex with GRIP1 and GRIA2. Interacts with ITGA4 through its chondroitin sulfate glycosaminoglycan. Interacts with BCAR1, CDC42 and ACK1. Interacts with MMP16. Interacts with the first PDZ domain of MPDZ. Interacts with PRKCA. Interacts with LGALS3 and the integrin composed of ITGB1 and ITGA3. Binds TNC, laminin-1, COL5A1 and COL6A2. Interacts with PLG and angiostatin. Binds FGF2 and PDGFA. N-glycosylated. In terms of processing, O-glycosylated; contains glycosaminoglycan chondroitin sulfate which are required for proper localization and function in stress fiber formation. Involved in interaction with MMP16 and ITGA4. Post-translationally, phosphorylation by PRKCA regulates its subcellular location and function in cell motility. In terms of tissue distribution, neural cells and also extraneural tissues, especially in the developing mesenchyme.

It is found in the cell membrane. Its subcellular location is the apical cell membrane. It localises to the cell projection. The protein localises to the lamellipodium membrane. The protein resides in the cell surface. Proteoglycan playing a role in cell proliferation and migration which stimulates endothelial cells motility during microvascular morphogenesis. May also inhibit neurite outgrowth and growth cone collapse during axon regeneration. Cell surface receptor for collagen alpha 2(VI) which may confer cells ability to migrate on that substrate. Binds through its extracellular N-terminus growth factors, extracellular matrix proteases modulating their activity. May regulate MPP16-dependent degradation and invasion of type I collagen participating in melanoma cells invasion properties. May modulate the plasminogen system by enhancing plasminogen activation and inhibiting angiostatin. Also functions as a signal transducing protein by binding through its cytoplasmic C-terminus scaffolding and signaling proteins. May promote retraction fiber formation and cell polarization through Rho GTPase activation. May stimulate alpha-4, beta-1 integrin-mediated adhesion and spreading by recruiting and activating a signaling cascade through CDC42, ACK1 and BCAR1. May activate FAK and ERK1/ERK2 signaling cascades. This Rattus norvegicus (Rat) protein is Chondroitin sulfate proteoglycan 4 (Cspg4).